The primary structure comprises 338 residues: Fructose-1,6-bisphosphatase class 1 (338 aa).

Residues E94, D116, L118, and D119 each contribute to the Mg(2+) site. Substrate-binding positions include 119–122 (DGSS), N210, and K276. Residue E282 coordinates Mg(2+).

This sequence belongs to the FBPase class 1 family. As to quaternary structure, homotetramer. It depends on Mg(2+) as a cofactor.

Its subcellular location is the cytoplasm. It catalyses the reaction beta-D-fructose 1,6-bisphosphate + H2O = beta-D-fructose 6-phosphate + phosphate. Its pathway is carbohydrate biosynthesis; gluconeogenesis. The polypeptide is Fructose-1,6-bisphosphatase class 1 (Burkholderia thailandensis (strain ATCC 700388 / DSM 13276 / CCUG 48851 / CIP 106301 / E264)).